A 263-amino-acid chain; its full sequence is Small ribosomal subunit protein uS2 (263 aa).

Residue serine 2 is modified to N-acetylserine. Residues 211 to 242 (EQTAEEEAEAAEGAEFEVEEEEVEQEWQEPAE) are compositionally biased toward acidic residues. The disordered stretch occupies residues 211 to 263 (EQTAEEEAEAAEGAEFEVEEEEVEQEWQEPAEADWNASAPPADWNDAANAEAF). The span at 246–263 (NASAPPADWNDAANAEAF) shows a compositional bias: low complexity.

It belongs to the universal ribosomal protein uS2 family. As to quaternary structure, component of the small ribosomal subunit. Mature ribosomes consist of a small (40S) and a large (60S) subunit. The 40S subunit contains about 33 different proteins and 1 molecule of RNA (18S). The 60S subunit contains about 49 different proteins and 3 molecules of RNA (25S, 5.8S and 5S). Interacts with RPS21.

Its subcellular location is the cytoplasm. In terms of biological role, required for the assembly and/or stability of the 40S ribosomal subunit. Required for the processing of the 20S rRNA-precursor to mature 18S rRNA in a late step of the maturation of 40S ribosomal subunits. This chain is Small ribosomal subunit protein uS2, found in Komagataella phaffii (strain GS115 / ATCC 20864) (Yeast).